The sequence spans 858 residues: Zinc finger protein ZXDC (858 aa).

Disordered regions lie at residues 1 to 73, 85 to 108, and 142 to 175; these read MDLP…GGDS, DTHGQEEAEPDSGASPTEQVPAAA, and AAPSLHPATTPGLEPSSAAASRRGPVAASAGSPA. Residues 59–68 show a composition bias toward pro residues; sequence APGPSPPPPE. Residues 142–152 are compositionally biased toward low complexity; the sequence is AAPSLHPATTP. 10 consecutive C2H2-type zinc fingers follow at residues 176 to 200, 209 to 233, 239 to 263, 269 to 291, 298 to 322, 329 to 353, 359 to 383, 389 to 413, 419 to 443, and 452 to 477; these read YRCPEPQCALSFAKKHQLKVHLLTH, FKCPLDGCGWAFTTSYKLKRHLQSH, FSCPVGGCGKKFTTVYNLKAHMKGH, FKCEVCAERFPTHAKLNSHQRSH, YKCDFPGCEKTFITVSALFSHNRAH, FSCSFPGCNKQYDKACRLKIHLRSH, FICDSDSCGWTFTSMSKLLRHKRKH, FTCPVEGCGKSFTRAEHLKGHSITH, FECPVEGCCARFSARSSLYIHSKKH, and SRCPVSSCNRLFTSKHSMKAHVVRQH. Over residues 624–634 the composition is skewed to polar residues; sequence DSPALTPSNNL. A disordered region spans residues 624 to 652; it reads DSPALTPSNNLTAPGTTPTSSDTTQETGS. Positions 635 to 651 are enriched in low complexity; it reads TAPGTTPTSSDTTQETG. Residue Lys-661 forms a Glycyl lysine isopeptide (Lys-Gly) (interchain with G-Cter in SUMO) linkage. 2 disordered regions span residues 671-714 and 727-751; these read DVVQ…LESG and VKKKKQKGTGSDEGASDSAHRKVKG. Positions 681-692 are enriched in polar residues; that stretch reads GPSQSVLSSSTE.

The protein belongs to the ZXD family. In terms of assembly, self-associates. Interacts with ZXDB and CIITA. Sumoylated at Lys-661 with SUMO1, SUMO2 and SUMO3; sumoylation enhances the activity of the transcriptional activation domain.

Its subcellular location is the nucleus. In terms of biological role, cooperates with CIITA to promote transcription of MHC class I and MHC class II genes. This is Zinc finger protein ZXDC (Zxdc) from Mus musculus (Mouse).